Consider the following 450-residue polypeptide: MKHTLPSALVTLWRDSPGYESARSRTFNQRVPPELPYAIVKPKNVEQIQQAVQLAIDLDKQIRIRSGGHSLAGWTLCADSILIDLVDFMHLEYDATTAIASASPSATSAQLNDLLVPHGRFVPVGHCGDVGLGGFFLQGGMGLNCRSYGWACEYLVGVDLITADGEYKHCSESENADLFWAARGAGPEFPAIVTRFFIRTRPAAAKHEKSTFIWPVACSDAVVSWILKILPELHADIEPLVVSTIVPGPNIAAILVQFLVFLGTNETGAEKLEPSLTAMPDGTIMEFKGVSTSIQQEYVSQEGTMPRDSRYICDSVWFKDGIDFVAVTRRMFREFPRDRSMVYWEPKYPTSRRKLPDMAFSLQADQYLALFAIFEDSQQDQEQGIRIQEFIQEIEPYVLGTFAADGVPAVRKTQYWSAEVIERLYSVCQKWDPAHRLGCTLLDPTRKMKS.

In terms of domain architecture, FAD-binding PCMH-type spans 32–203 (PPELPYAIVK…TRFFIRTRPA (172 aa)).

This sequence belongs to the oxygen-dependent FAD-linked oxidoreductase family. The cofactor is FAD.

Its pathway is secondary metabolite biosynthesis. Functionally, FAD-linked oxidoreductase; part of the gene cluster that mediates the biosynthesis of the indole diterpenes penitrems. The geranylgeranyl diphosphate (GGPP) synthase penG catalyzes the first step in penitrem biosynthesis via conversion of farnesyl pyrophosphate and isopentyl pyrophosphate into geranylgeranyl pyrophosphate (GGPP). Condensation of indole-3-glycerol phosphate with GGPP by the prenyl transferase penC then forms 3-geranylgeranylindole (3-GGI). Epoxidation by the FAD-dependent monooxygenase penM leads to a epoxidized-GGI that is substrate of the terpene cyclase penB for cyclization to yield paspaline. Paspaline is subsequently converted to 13-desoxypaxilline by the cytochrome P450 monooxygenase penP, the latter being then converted to paxilline by the cytochrome P450 monooxygenase penQ. Paxilline is converted to beta-paxitriol via C-10 ketoreduction by the short-chain dehydrogenase PC-15 which can be monoprenylated at the C-20 by the indole diterpene prenyltransferase penD. A two-step elimination (acetylation and elimination) process performed by the O-acetyltransferase PC-16 and the P.simplicissimum ptmI-ortholog not yet identified in P.crustosum, leads to the production of the prenylated form of penijanthine. The FAD-linked oxidoreductase ptmO then converts the prenylated form of penijanthine into PC-M5 which is in turn transformed into PC-M4 by the aromatic dimethylallyltransferase PC-22. A series of oxidation steps involving 4 cytochrome P450 monooxygenases (PC-21, PC-05, PC-23, PC-20) and a FAD-dependent monooxygenase (PC-14) are required for the transformation of PC-M4 to penitrems A and E. Synthesis of these final products is proposed to proceed via penitrems D and C (PC-21, PC-05, PC-14) and penitrems B and F (PC-21, PC-05, PC-14, PC-23). This Penicillium crustosum (Blue mold fungus) protein is FAD-linked oxidoreductase penO.